Consider the following 120-residue polypeptide: Ribonuclease P protein component (120 aa).

The protein belongs to the RnpA family. In terms of assembly, consists of a catalytic RNA component (M1 or rnpB) and a protein subunit.

It carries out the reaction Endonucleolytic cleavage of RNA, removing 5'-extranucleotides from tRNA precursor.. Its function is as follows. RNaseP catalyzes the removal of the 5'-leader sequence from pre-tRNA to produce the mature 5'-terminus. It can also cleave other RNA substrates such as 4.5S RNA. The protein component plays an auxiliary but essential role in vivo by binding to the 5'-leader sequence and broadening the substrate specificity of the ribozyme. This chain is Ribonuclease P protein component, found in Blochmanniella floridana.